The following is a 352-amino-acid chain: Chorismate synthase (352 aa).

Residues arginine 48 and arginine 54 each contribute to the NADP(+) site. FMN is bound by residues 125-127 (RSS), 238-239 (NA), glycine 278, 293-297 (KPTSS), and arginine 319.

This sequence belongs to the chorismate synthase family. Homotetramer. FMNH2 is required as a cofactor.

The enzyme catalyses 5-O-(1-carboxyvinyl)-3-phosphoshikimate = chorismate + phosphate. The protein operates within metabolic intermediate biosynthesis; chorismate biosynthesis; chorismate from D-erythrose 4-phosphate and phosphoenolpyruvate: step 7/7. In terms of biological role, catalyzes the anti-1,4-elimination of the C-3 phosphate and the C-6 proR hydrogen from 5-enolpyruvylshikimate-3-phosphate (EPSP) to yield chorismate, which is the branch point compound that serves as the starting substrate for the three terminal pathways of aromatic amino acid biosynthesis. This reaction introduces a second double bond into the aromatic ring system. This Bordetella avium (strain 197N) protein is Chorismate synthase.